The following is an 874-amino-acid chain: Endothelial PAS domain-containing protein 1 (874 aa).

Residues 1-23 (MTADKEKKRSSSELRKEKSRDAA) form a disordered region. The 54-residue stretch at 14–67 (LRKEKSRDAARCRRSKETEVFYELAHELPLPHSVSSHLDKASIMRLAISFLRTH) folds into the bHLH domain. The tract at residues 26–53 (RRSKETEVFYELAHELPLPHSVSSHLDK) is DNA-binding. Residues 84–154 (DQQMDNLYLK…ENLTLKNGSG (71 aa)) form the PAS 1 domain. Positions 171 to 192 (RMKCTVTNRGRTVNLKSATWKV) are required for heterodimer formation with ARNT. Residues 230 to 300 (QHPSHMDIPL…KSHQNLCTKG (71 aa)) form the PAS 2 domain. The PAC domain occupies 304-347 (SGQYRMLAKHGGYVWLETQGTVIYNPRNLQPQCIMCVNYVLSEI). Pro-405 carries the post-translational modification 4-hydroxyproline. The segment at 438–489 (WVSGLRSHSAQSESGSLPAFTVPQADTPGNTTPSASSSSSCSTPSSPEDYYS) is disordered. The segment covering 443 to 452 (RSHSAQSESG) has biased composition (polar residues). The segment covering 464 to 484 (TPGNTTPSASSSSSCSTPSSP) has biased composition (low complexity). The segment at 495-541 (LKIEVIEKLFAMDTEPRDPGSTQTDFSELDLETLAPYIPMDGEDFQL) is NTAD. At Pro-530 the chain carries 4-hydroxyproline. Residues 777–803 (LGQPLRHLPPPQPPSTRSSGENAKTGF) form a disordered region. A CTAD region spans residues 834-874 (SFEPYLLPELTRYDCEVNVPVPGSSTLLQGRDLLRALDQAT). Thr-844 bears the Phosphothreonine mark. At Asn-851 the chain carries (3S)-3-hydroxyasparagine.

In terms of assembly, interacts with HIF3A isoform 2. Efficient DNA binding requires dimerization with another bHLH protein. Heterodimerizes with ARNT; heterodimer binds to core DNA sequence 5'-TACGTG-3' within the hypoxia response element (HRE) of target gene promoters. Interacts with CREBBP. Interacts with EGLN1. Interacts with VHL. Post-translationally, in normoxia, is probably hydroxylated on Pro-405 and Pro-530 by EGLN1/PHD1, EGLN2/PHD2 and/or EGLN3/PHD3. The hydroxylated prolines promote interaction with VHL, initiating rapid ubiquitination and subsequent proteasomal degradation. Under hypoxia, proline hydroxylation is impaired and ubiquitination is attenuated, resulting in stabilization. In normoxia, is hydroxylated on Asn-851 by HIF1AN thus probably abrogating interaction with CREBBP and EP300 and preventing transcriptional activation. In terms of processing, phosphorylated on multiple sites in the CTAD. Post-translationally, the iron and 2-oxoglutarate dependent 3-hydroxylation of asparagine is (S) stereospecific within HIF CTAD domains. Expressed in most tissues, with highest levels in lung, followed by heart, kidney, brain and liver. Predominantly expressed in endothelial cells. Also found in smooth muscle cells of the uterus, neurons, and brown adipose tissue. High expression in embryonic choroid plexus and kidney glomeruli.

It localises to the nucleus. It is found in the nucleus speckle. Transcription factor involved in the induction of oxygen regulated genes. Heterodimerizes with ARNT; heterodimer binds to core DNA sequence 5'-TACGTG-3' within the hypoxia response element (HRE) of target gene promoters. Regulates the vascular endothelial growth factor (VEGF) expression and seems to be implicated in the development of blood vessels and the tubular system of lung. May also play a role in the formation of the endothelium that gives rise to the blood brain barrier. Potent activator of the Tie-2 tyrosine kinase expression. Activation requires recruitment of transcriptional coactivators such as CREBBP and probably EP300. Interaction with redox regulatory protein APEX seems to activate CTAD. This chain is Endothelial PAS domain-containing protein 1 (Epas1), found in Mus musculus (Mouse).